The chain runs to 539 residues: Putative S-adenosyl-L-methionine-dependent methyltransferase MAP_4079 (539 aa).

Residues aspartate 134 and 163–164 each bind S-adenosyl-L-methionine; that span reads DL. The disordered stretch occupies residues 290-392; that stretch reads AGYGRGRRRP…RGEPGERGGQ (103 aa). Polar residues predominate over residues 301-313; the sequence is SATSCRGTCSSPR. Positions 341–351 are enriched in gly residues; it reads HGFGNQCGGPD.

It belongs to the UPF0677 family.

In terms of biological role, exhibits S-adenosyl-L-methionine-dependent methyltransferase activity. This is Putative S-adenosyl-L-methionine-dependent methyltransferase MAP_4079 from Mycolicibacterium paratuberculosis (strain ATCC BAA-968 / K-10) (Mycobacterium paratuberculosis).